The chain runs to 480 residues: Beta-glucosidase A (480 aa).

E177 functions as the Proton donor in the catalytic mechanism. The Nucleophile role is filled by E378.

The protein belongs to the glycosyl hydrolase 1 family.

It catalyses the reaction Hydrolysis of terminal, non-reducing beta-D-glucosyl residues with release of beta-D-glucose.. The chain is Beta-glucosidase A (bglA) from Enterobacter agglomerans (Erwinia herbicola).